The chain runs to 235 residues: Peptidyl-tRNA hydrolase (235 aa).

Residue Tyr14 coordinates tRNA. Residue His19 is the Proton acceptor of the active site. Phe64, Asn66, and Asn112 together coordinate tRNA. The tract at residues 188–235 (APARNSGTRPDNPGKGSPEKPAAKPANDPIAEPPSLSDRLRALTERFR) is disordered. Positions 225–235 (DRLRALTERFR) are enriched in basic and acidic residues.

Belongs to the PTH family. Monomer.

Its subcellular location is the cytoplasm. The enzyme catalyses an N-acyl-L-alpha-aminoacyl-tRNA + H2O = an N-acyl-L-amino acid + a tRNA + H(+). In terms of biological role, hydrolyzes ribosome-free peptidyl-tRNAs (with 1 or more amino acids incorporated), which drop off the ribosome during protein synthesis, or as a result of ribosome stalling. Catalyzes the release of premature peptidyl moieties from peptidyl-tRNA molecules trapped in stalled 50S ribosomal subunits, and thus maintains levels of free tRNAs and 50S ribosomes. This Paracoccus denitrificans (strain Pd 1222) protein is Peptidyl-tRNA hydrolase.